A 107-amino-acid chain; its full sequence is Early E3A 12.5 kDa protein (107 aa).

This sequence belongs to the adenoviridae E3A-2 family.

In terms of biological role, not yet known. The chain is Early E3A 12.5 kDa protein from Human adenovirus C serotype 5 (HAdV-5).